The following is a 360-amino-acid chain: Phospho-N-acetylmuramoyl-pentapeptide-transferase (360 aa).

10 consecutive transmembrane segments (helical) span residues 20–40, 71–91, 93–113, 134–154, 168–188, 199–219, 239–259, 263–283, 288–308, and 337–357; these read YITF…FFFG, TPTM…LLWA, LDNG…AIGF, LLIG…LHPA, ALIN…LGAA, GLAI…AYMV, LAVF…YNAP, VFMG…IAVV, IVLA…IIQV, and QIVI…LATL.

Belongs to the glycosyltransferase 4 family. MraY subfamily. Mg(2+) is required as a cofactor.

It localises to the cell inner membrane. It carries out the reaction UDP-N-acetyl-alpha-D-muramoyl-L-alanyl-gamma-D-glutamyl-meso-2,6-diaminopimeloyl-D-alanyl-D-alanine + di-trans,octa-cis-undecaprenyl phosphate = di-trans,octa-cis-undecaprenyl diphospho-N-acetyl-alpha-D-muramoyl-L-alanyl-D-glutamyl-meso-2,6-diaminopimeloyl-D-alanyl-D-alanine + UMP. The protein operates within cell wall biogenesis; peptidoglycan biosynthesis. Its function is as follows. Catalyzes the initial step of the lipid cycle reactions in the biosynthesis of the cell wall peptidoglycan: transfers peptidoglycan precursor phospho-MurNAc-pentapeptide from UDP-MurNAc-pentapeptide onto the lipid carrier undecaprenyl phosphate, yielding undecaprenyl-pyrophosphoryl-MurNAc-pentapeptide, known as lipid I. This Paracoccus denitrificans (strain Pd 1222) protein is Phospho-N-acetylmuramoyl-pentapeptide-transferase.